A 489-amino-acid chain; its full sequence is MNELRKLSIAQMHNGLKQRSFSAVELIEVHINAVENEKLNAFITKTPEIAIKAAKTADERFSQQKDSTISPLMGIPVGVKDLFCTKGVKTTACSKMLENFIPTYESTVSDLLLKSGAAMLGKLNMDEFAMGSANINSYFGPVENVWVRKSDGEKVVPGGSSGGSAASVAGFLCAGALGSDTGGSVRQPAAYCGVVGAKPTYGRCSRFGMIAFASSLDQAGVITRSVSDSALMLETICGYDNKDSTSSERPVPRFSNFINGDIKGRRIGIPKEYRMDGISEEIIYHWEKVSSDLKENGAEVVDITLPHTKYAIPVYYLICSAEASSNLARYDGVRYGLRVNADILEEMYSLTRAEGFGKEVKRRILIGAYALSSGHYNEYYEKAQCIRALIRNDFIKAFEKIDYILVPSAPTEAFGLNEKPDPLIMCINDVFTVPASLAGLPAISVPVGLSNEGLPLALQVIGNYYDEAGMLNVASVIEQNCSRIIKLNS.

Catalysis depends on charge relay system residues lysine 80 and serine 160. Residue serine 184 is the Acyl-ester intermediate of the active site.

Belongs to the amidase family. GatA subfamily. Heterotrimer of A, B and C subunits.

The catalysed reaction is L-glutamyl-tRNA(Gln) + L-glutamine + ATP + H2O = L-glutaminyl-tRNA(Gln) + L-glutamate + ADP + phosphate + H(+). Allows the formation of correctly charged Gln-tRNA(Gln) through the transamidation of misacylated Glu-tRNA(Gln) in organisms which lack glutaminyl-tRNA synthetase. The reaction takes place in the presence of glutamine and ATP through an activated gamma-phospho-Glu-tRNA(Gln). This Wolbachia sp. subsp. Brugia malayi (strain TRS) protein is Glutamyl-tRNA(Gln) amidotransferase subunit A.